The sequence spans 299 residues: Aspartate carbamoyltransferase catalytic subunit (299 aa).

Residues Arg54 and Thr55 each contribute to the carbamoyl phosphate site. Lys83 provides a ligand contact to L-aspartate. Arg104, His132, and Gln135 together coordinate carbamoyl phosphate. 2 residues coordinate L-aspartate: Arg165 and Arg222. Leu261 and Pro262 together coordinate carbamoyl phosphate.

The protein belongs to the aspartate/ornithine carbamoyltransferase superfamily. ATCase family. As to quaternary structure, heterooligomer of catalytic and regulatory chains.

The catalysed reaction is carbamoyl phosphate + L-aspartate = N-carbamoyl-L-aspartate + phosphate + H(+). The protein operates within pyrimidine metabolism; UMP biosynthesis via de novo pathway; (S)-dihydroorotate from bicarbonate: step 2/3. In terms of biological role, catalyzes the condensation of carbamoyl phosphate and aspartate to form carbamoyl aspartate and inorganic phosphate, the committed step in the de novo pyrimidine nucleotide biosynthesis pathway. In Archaeoglobus fulgidus (strain ATCC 49558 / DSM 4304 / JCM 9628 / NBRC 100126 / VC-16), this protein is Aspartate carbamoyltransferase catalytic subunit.